The chain runs to 175 residues: Peptide methionine sulfoxide reductase MsrA (175 aa).

Residue C12 is part of the active site.

This sequence belongs to the MsrA Met sulfoxide reductase family.

It catalyses the reaction L-methionyl-[protein] + [thioredoxin]-disulfide + H2O = L-methionyl-(S)-S-oxide-[protein] + [thioredoxin]-dithiol. The catalysed reaction is [thioredoxin]-disulfide + L-methionine + H2O = L-methionine (S)-S-oxide + [thioredoxin]-dithiol. Has an important function as a repair enzyme for proteins that have been inactivated by oxidation. Catalyzes the reversible oxidation-reduction of methionine sulfoxide in proteins to methionine. The polypeptide is Peptide methionine sulfoxide reductase MsrA (Limosilactobacillus reuteri (strain DSM 20016) (Lactobacillus reuteri)).